The primary structure comprises 568 residues: Acyl-CoA ligase gloD (568 aa).

Residues 211–219 (TSGTSGFLK), 352–357 (PGYGLT), aspartate 436, arginine 455, and lysine 553 contribute to the ATP site. An SBD1 region spans residues 282–352 (DMQIALKSVQ…QLCPEWEINP (71 aa)). The segment at 353–415 (GYGLTESFVC…VRSPSVMKEY (63 aa)) is SBD2.

The protein belongs to the ATP-dependent AMP-binding enzyme family.

The protein operates within mycotoxin biosynthesis. In terms of biological role, acyl-CoA ligase; part of the gene cluster that mediates the biosynthesis of pneumocandins, lipohexapeptides of the echinocandin family that prevent fungal cell wall formation by non-competitive inhibition of beta-1,3-glucan synthase. The 10,12-dimethylmyristoyl side chain is synthesized by the reducing polyketide synthase gloL/GLPKS4. The thioesterase gloN/GLHYD exclusively interacts with gloL/GLPKS4 to maintain turnover of the polyketide side chain. The 10R,12S-dimethylmyristic acid is then transferred to the first thiolation domain of the nonribosomal peptide synthetase gloA/GLNRPS4 by the acyl-AMP ligase gloD/GLligase, followed by its acylation to L-ornithine to trigger elongation of the cyclic hexapeptide. L-ornithine, 4R-hydroxyl-L-proline (generated from L-proline by the dioxygenase gloF/GLOXY2), 3S-hydroxyl-L-homotyrosine (generated by gloG/GLHtyB, gloH/GLHtyA, gloI/GLHtyC, gloJ/GLHtyD and hydroxylated at C-3 by the dioxygenase gloM/GLOXY1), 3R-hydroxyl-L-glutamine (generated from L-glutamine probably by the dioxygenase gloE/GLOXY3) and 3S-hydroxyl-L-proline (generated from L-proline by the dioxygenase gloF/GLOXY2 to yield pneumocandin B0), or 3S-hydroxyl-4S-methyl-L-proline (generated from L-leucine by the dioxygenase gloC/GLOXY4 to yield pneumocandin A0) are sequentially added to the growing chain. The last C domain of gloA/GLNRPS4 is proposed to be responsible for cyclization by condensation to form the peptide bond between L-ornithine and 3S-hydroxyl-4S-methyl-L-proline (for pneumocandin A0) or 3S-hydroxyl-L-proline (for pneumocandin B0). Finally, the subsequent C-4 hydroxylation of 3S-hydroxyl-L-homotyrosine and L-ornithine dihydroxylation at C-4 and C-5 are performed by the cytochrome P450 monooxygenases gloP/GLP450-1 and gloO/GLP450-2, respectively. The polypeptide is Acyl-CoA ligase gloD (Glarea lozoyensis (strain ATCC 20868 / MF5171)).